The sequence spans 503 residues: MKKSSKEISPSQSLKNGGSDHFFNTSLMYVLAACLASFIFGYQVSVLNTIKNFIVIEFGWCTGNKVECDDSTLKSSFLLASVFIGAVVGSGFSDYLVQHGRRFSLLVIYNFFILVSILTSITHHFHTILFSRLLSGFGVGLITVSVPMYISEMTHKDKKGAYGVLHQLFITFGILVAVLLGMAMGEAPDAKSVDALGEFQKIWWRLMFFFPCLISILGIVLLTFFYKEETPYYLFENGKIEESKKILKKIYGTDNVDEPLKAIKDAVEQNEAAKKNSISLMRAMQIPSYRNVILLGCILSGLQQFTGINVLVSNSNELYKEFLSNKLITTLSVIMTVVNFLMTFPAIYIVEKLGRKTLLLCGCAGVTLAAFLPTAIANQIDRSSDLVRNLSIAATFVMIISFAVSYGPVLWIYLHEMFPSEIKDSAASLASLVNWVCAIIVVFPSDIIIKKSPTILFFIFSGMSILSFLFIFFFIKETKGGEIGTSPYITMEERQKHMGKSAV.

Residues 1-26 lie on the Cytoplasmic side of the membrane; sequence MKKSSKEISPSQSLKNGGSDHFFNTS. Residues 27-47 form a helical membrane-spanning segment; the sequence is LMYVLAACLASFIFGYQVSVL. Over 48-76 the chain is Extracellular; sequence NTIKNFIVIEFGWCTGNKVECDDSTLKSS. A disulfide bridge links Cys61 with Cys68. The helical transmembrane segment at 77–97 threads the bilayer; it reads FLLASVFIGAVVGSGFSDYLV. The Cytoplasmic segment spans residues 98 to 102; it reads QHGRR. A helical membrane pass occupies residues 103–123; it reads FSLLVIYNFFILVSILTSITH. Residues 124–132 lie on the Extracellular side of the membrane; the sequence is HFHTILFSR. A helical transmembrane segment spans residues 133–153; that stretch reads LLSGFGVGLITVSVPMYISEM. At 154-163 the chain is on the cytoplasmic side; that stretch reads THKDKKGAYG. The chain crosses the membrane as a helical span at residues 164 to 184; the sequence is VLHQLFITFGILVAVLLGMAM. Gln167 lines the alpha-D-glucose pocket. Gln167 provides a ligand contact to beta-D-glucose. The Extracellular portion of the chain corresponds to 185-205; it reads GEAPDAKSVDALGEFQKIWWR. Residues 206 to 226 form a helical membrane-spanning segment; the sequence is LMFFFPCLISILGIVLLTFFY. Over 227-291 the chain is Cytoplasmic; sequence KEETPYYLFE…RAMQIPSYRN (65 aa). A helical membrane pass occupies residues 292–312; the sequence is VILLGCILSGLQQFTGINVLV. Gln303, Gln304, and Asn309 together coordinate alpha-D-glucose. Gln303 is a beta-D-glucose binding site. Asn309 is a binding site for beta-D-glucose. Residues 313 to 329 are Extracellular-facing; sequence SNSNELYKEFLSNKLIT. The chain crosses the membrane as a helical span at residues 330–350; it reads TLSVIMTVVNFLMTFPAIYIV. Asn339 serves as a coordination point for beta-D-glucose. Over 351–356 the chain is Cytoplasmic; that stretch reads EKLGRK. The helical transmembrane segment at 357 to 377 threads the bilayer; that stretch reads TLLLCGCAGVTLAAFLPTAIA. The Extracellular portion of the chain corresponds to 378-391; that stretch reads NQIDRSSDLVRNLS. A helical membrane pass occupies residues 392–412; sequence IAATFVMIISFAVSYGPVLWI. Trp411 contributes to the alpha-D-glucose binding site. At 413-428 the chain is on the cytoplasmic side; that stretch reads YLHEMFPSEIKDSAAS. The chain crosses the membrane as a helical span at residues 429 to 449; it reads LASLVNWVCAIIVVFPSDIII. The Extracellular segment spans residues 450 to 454; sequence KKSPT. A helical transmembrane segment spans residues 455 to 475; the sequence is ILFFIFSGMSILSFLFIFFFI. Residues 476 to 503 are Cytoplasmic-facing; it reads KETKGGEIGTSPYITMEERQKHMGKSAV.

Belongs to the major facilitator superfamily. Sugar transporter (TC 2.A.1.1) family. Homodimer.

The protein resides in the cell membrane. The catalysed reaction is D-glucose(out) = D-glucose(in). It carries out the reaction D-fructose(out) = D-fructose(in). It catalyses the reaction D-galactose(in) = D-galactose(out). The enzyme catalyses D-mannose(out) = D-mannose(in). The catalysed reaction is D-glucosamine(out) = D-glucosamine(in). It carries out the reaction D-xylose(out) = D-xylose(in). Inhibited by compound 3361 (3-O-((undec-10-en)-1-yl)-D-glucose). Its function is as follows. Sodium-independent facilitative hexose transporter. Can transport D-glucose and D-fructose. Can transport D-mannose, D-galactose, D-xylose and D-glucosamine. The protein is Hexose transporter 1 of Plasmodium vivax.